We begin with the raw amino-acid sequence, 551 residues long: Seventh homolog of septin 1 (551 aa).

N-acetylserine is present on S2. One can recognise a Septin-type G domain in the interval 20-339 (RGITYTMLLC…ENYRSEKLSS (320 aa)). Positions 30–37 (GPAGTGKT) are G1 motif. GTP-binding positions include 30 to 37 (GPAGTGKT), G138, 218 to 226 (RADSFTKEE), and R288. A G3 motif region spans residues 135-138 (MTHG). Residues 217–220 (TRAD) form a G4 motif region. The disordered stretch occupies residues 381–417 (NLRADTPRNQVSGNFKENEYEDNGEHDSAENEQEMSP). The residue at position 400 (Y400) is a Phosphotyrosine. 2 positions are modified to phosphoserine: S408 and S416. Residues 418–518 (VRQLGREIKQ…KLINQNKLNG (101 aa)) adopt a coiled-coil conformation. Glycyl lysine isopeptide (Lys-Gly) (interchain with G-Cter in SUMO) cross-links involve residues K426 and K437. S447, S460, S519, S520, S522, and S525 each carry phosphoserine. Positions 515–551 (KLNGSSSSINSLQQSTRSQIKKNDTYTDLASIASGRD) are disordered. A compositionally biased stretch (low complexity) spans 519–532 (SSSSINSLQQSTRS). A Phosphothreonine modification is found at T539. Phosphoserine occurs at positions 545 and 548.

This sequence belongs to the TRAFAC class TrmE-Era-EngA-EngB-Septin-like GTPase superfamily. Septin GTPase family. Component of the septin complex which consists of CDC3, CDC10, CDC11, CDC12 and probably SHS1 and rearranges to a cortical collar of highly ordered filaments at the mother-bud-neck. A complex formed by CDC3, CDC10, CDC11 and CDC12 is capable of forming long filaments in vitro and the components seem to be present in a 2:2:2:2 arrangement in vivo. The filaments are proposed to be formed by the end-to-end polymerization of CDC3-CDC12-CDC11 complexes with CDC10 serving as a bridge to bundle the polymers into paired filaments. Component of the GIN4 complex composed of at least BNI5, CDC3, CDC10, CDC11, CDC12, GIN4, NAP1 and SHS1. Self-associates. Interacts with CDC11 and SPA2. In terms of processing, phosphorylated by GIN4 and CLA4. Phosphorylation state is essential for septin ring dynamics during telophase. Post-translationally, sumoylated during mitosis on the mother cell side of the bud neck. Sumoylation probably plays a central role in regulating septin ring disassembly during the cell cycle.

It localises to the membrane. Its subcellular location is the bud neck. Its function is as follows. Septins are GTPases involved in cytokinesis that assemble early in the cell cycle as a patch at the incipient bud site and form a ring approximately 15 minutes before bud emergence, which transforms into an hour-glass shaped collar of cortical filaments that spans both sides of the mother-bud neck. This collar persists until just before cytokinesis, when it splits into two rings that occupy opposite sides of the neck. The septins at the bud neck serve as a structural scaffold that recruits different components involved in diverse processes at specific stages during the cell cycle. Many proteins bind asymmetrically to the septin collar. The septin assembly is regulated by protein kinases GIN4 and/or CLA4. May act by recruiting MYO1 and HOF1, a protein involved in septation, to the site of cleavage. Septins are also involved in cell morphogenesis, bud site selection, chitin deposition, cell cycle regulation, cell compartmentalization and spore wall formation. CDCd11 with SHS1 11 are involved in the recruitment of BNI5 and thereby ensure efficient localization at the bud neck of MYO1, the type II myosin of the actomyosin contractile ring. This chain is Seventh homolog of septin 1, found in Saccharomyces cerevisiae (strain ATCC 204508 / S288c) (Baker's yeast).